Reading from the N-terminus, the 172-residue chain is Thioredoxin Y1, chloroplastic (172 aa).

The transit peptide at 1–62 (MASISLSSST…SSTTRCTPRR (62 aa)) directs the protein to the chloroplast. Positions 63-169 (IEAKKQTFDS…LIQRIEDSLK (107 aa)) constitute a Thioredoxin domain. Catalysis depends on nucleophile residues Cys93 and Cys96. Cys93 and Cys96 are disulfide-bonded.

It belongs to the thioredoxin family. Plant Y-type subfamily. In terms of tissue distribution, expressed in roots and seeds.

It localises to the plastid. Its subcellular location is the chloroplast stroma. In terms of biological role, thiol-disulfide oxidoreductase that poorly activates chloroplastic malate dehydrogenase (NADP-MDH) and fructose-1,6-bisphosphatase. Provides reducing equivalents for peroxiredoxin Q. This chain is Thioredoxin Y1, chloroplastic, found in Arabidopsis thaliana (Mouse-ear cress).